The following is a 152-amino-acid chain: MIYYVIALFVIAIDQISKWLIVKNMELGTSIPIIDNVLYITSHRNRGAAWGILENKMWFFYIITVIFVAFIVFYMKKYAKTDKLLGISLGLILGGAIGNFIDRVFRQEVVDFIHVYIFSYNYPVFNIADSALCIGVVLIIIQTVLEGKKAKE.

2 consecutive transmembrane segments (helical) span residues 55–75 (NKMW…VFYM) and 85–105 (LGIS…DRVF). Catalysis depends on residues D111 and D129. A helical transmembrane segment spans residues 124–144 (VFNIADSALCIGVVLIIIQTV).

This sequence belongs to the peptidase A8 family.

It is found in the cell membrane. It carries out the reaction Release of signal peptides from bacterial membrane prolipoproteins. Hydrolyzes -Xaa-Yaa-Zaa-|-(S,diacylglyceryl)Cys-, in which Xaa is hydrophobic (preferably Leu), and Yaa (Ala or Ser) and Zaa (Gly or Ala) have small, neutral side chains.. It participates in protein modification; lipoprotein biosynthesis (signal peptide cleavage). Functionally, this protein specifically catalyzes the removal of signal peptides from prolipoproteins. The protein is Lipoprotein signal peptidase of Bacillus mycoides (strain KBAB4) (Bacillus weihenstephanensis).